We begin with the raw amino-acid sequence, 68 residues long: Metallothionein (68 aa).

The a divalent metal cation site is built by C7, C9, C14, C16, C20, C22, C25, C27, C35, C39, C40, C42, C43, C47, C50, C54, C56, C64, C66, and C67.

The protein belongs to the metallothionein superfamily. Type 1 family.

Metallothioneins have a high content of cysteine residues that bind various heavy metals. The chain is Metallothionein (mt) from Scyliorhinus torazame (Cloudy catshark).